Reading from the N-terminus, the 198-residue chain is Beta-crystallin A1-2 (198 aa).

The interval 1–13 is N-terminal arm; it reads MAQINPLPVPLGP. Beta/gamma crystallin 'Greek key' domains lie at 14-53 and 54-100; these read WKIT…KVEC and GAWI…RPIC. Positions 101–106 are connecting peptide; sequence SANHIE. Beta/gamma crystallin 'Greek key' domains lie at 107–148 and 149–197; these read SKLV…KVQC and GAWV…RRIQ.

This sequence belongs to the beta/gamma-crystallin family. In terms of assembly, homo/heterodimer, or complexes of higher-order. The structure of beta-crystallin oligomers seems to be stabilized through interactions between the N-terminal arms. In terms of processing, the N-terminus is blocked.

Functionally, crystallins are the dominant structural components of the vertebrate eye lens. This Aquarana catesbeiana (American bullfrog) protein is Beta-crystallin A1-2.